Consider the following 261-residue polypeptide: Cytochrome c oxidase subunit 3 (261 aa).

Residues 1-15 (MTHQTHAYHMVNPSP) lie on the Mitochondrial matrix side of the membrane. Residues 16–34 (WPLTGALSALLMTSGLIMW) traverse the membrane as a helical segment. The Mitochondrial intermembrane segment spans residues 35 to 40 (FHFNST). The helical transmembrane segment at 41-66 (ILLMLGLTTNMLTMYQWWRDVIREST) threads the bilayer. At 67–72 (FQGHHT) the chain is on the mitochondrial matrix side. The chain crosses the membrane as a helical span at residues 73–105 (PNVQKGLRYGMILFIISEVLFFTGFFWAFYHSS). At 106-128 (LAPTPELGGCWPPTGIHPLNPLE) the chain is on the mitochondrial intermembrane side. Residues 129-152 (VPLLNTSVLLASGVSITWAHHSLM) form a helical membrane-spanning segment. The Mitochondrial matrix portion of the chain corresponds to 153–155 (EGN). A helical transmembrane segment spans residues 156 to 183 (RNHMLQALFITIALGVYFTLLQASEYYE). Residues 184-190 (APFTISD) are Mitochondrial intermembrane-facing. Residues 191–223 (GVYGSTFFVATGFHGLHVIIGSTFLIVCFFRQL) form a helical membrane-spanning segment. Over 224-232 (KFHFTSNHH) the chain is Mitochondrial matrix. A helical membrane pass occupies residues 233-256 (FGFEAAAWYWHFVDVVWLFLYVSI). Over 257 to 261 (YWWGS) the chain is Mitochondrial intermembrane.

The protein belongs to the cytochrome c oxidase subunit 3 family. Component of the cytochrome c oxidase (complex IV, CIV), a multisubunit enzyme composed of 14 subunits. The complex is composed of a catalytic core of 3 subunits MT-CO1, MT-CO2 and MT-CO3, encoded in the mitochondrial DNA, and 11 supernumerary subunits COX4I, COX5A, COX5B, COX6A, COX6B, COX6C, COX7A, COX7B, COX7C, COX8 and NDUFA4, which are encoded in the nuclear genome. The complex exists as a monomer or a dimer and forms supercomplexes (SCs) in the inner mitochondrial membrane with NADH-ubiquinone oxidoreductase (complex I, CI) and ubiquinol-cytochrome c oxidoreductase (cytochrome b-c1 complex, complex III, CIII), resulting in different assemblies (supercomplex SCI(1)III(2)IV(1) and megacomplex MCI(2)III(2)IV(2)).

The protein localises to the mitochondrion inner membrane. It catalyses the reaction 4 Fe(II)-[cytochrome c] + O2 + 8 H(+)(in) = 4 Fe(III)-[cytochrome c] + 2 H2O + 4 H(+)(out). Component of the cytochrome c oxidase, the last enzyme in the mitochondrial electron transport chain which drives oxidative phosphorylation. The respiratory chain contains 3 multisubunit complexes succinate dehydrogenase (complex II, CII), ubiquinol-cytochrome c oxidoreductase (cytochrome b-c1 complex, complex III, CIII) and cytochrome c oxidase (complex IV, CIV), that cooperate to transfer electrons derived from NADH and succinate to molecular oxygen, creating an electrochemical gradient over the inner membrane that drives transmembrane transport and the ATP synthase. Cytochrome c oxidase is the component of the respiratory chain that catalyzes the reduction of oxygen to water. Electrons originating from reduced cytochrome c in the intermembrane space (IMS) are transferred via the dinuclear copper A center (CU(A)) of subunit 2 and heme A of subunit 1 to the active site in subunit 1, a binuclear center (BNC) formed by heme A3 and copper B (CU(B)). The BNC reduces molecular oxygen to 2 water molecules using 4 electrons from cytochrome c in the IMS and 4 protons from the mitochondrial matrix. The chain is Cytochrome c oxidase subunit 3 (MT-CO3) from Eudorcas thomsonii (Thomson's gazelle).